The primary structure comprises 842 residues: Serine/threonine-protein phosphatase 4 regulatory subunit 3 (842 aa).

Regulatory subunit 3 (R3) of the histone H2A phosphatase complex (HTP-C) consisting of PPH3, PSY2 and PSY4.

It is found in the nucleus. Functionally, core regulatory subunit of the histone H2A phosphatase complex, which dephosphorylates H2AS128ph (gamma-H2A) that has been displaced from sites of DNA lesions in the double-stranded DNA break repair process. Dephosphorylation is necessary for efficient recovery from the DNA damage checkpoint. In Candida glabrata (strain ATCC 2001 / BCRC 20586 / JCM 3761 / NBRC 0622 / NRRL Y-65 / CBS 138) (Yeast), this protein is Serine/threonine-protein phosphatase 4 regulatory subunit 3 (PSY2).